A 58-amino-acid polypeptide reads, in one-letter code: UPF0434 protein Daro_3207 (58 aa).

The protein belongs to the UPF0434 family.

The chain is UPF0434 protein Daro_3207 from Dechloromonas aromatica (strain RCB).